Reading from the N-terminus, the 250-residue chain is rRNA methyltransferase 2, mitochondrial (250 aa).

The transit peptide at 1–35 directs the protein to the mitochondrion; the sequence is MRLVFTGNCVFKRLLHTEIGGKYAKQQPRNLKGRS. Residues 90-93, Asp-119, 136-137, and Asp-161 contribute to the S-adenosyl-L-methionine site; these read PGSW and DF. Lys-201 functions as the Proton acceptor in the catalytic mechanism.

It belongs to the class I-like SAM-binding methyltransferase superfamily. RNA methyltransferase RlmE family.

It is found in the mitochondrion. It carries out the reaction a uridine in rRNA + S-adenosyl-L-methionine = a 2'-O-methyluridine in rRNA + S-adenosyl-L-homocysteine + H(+). S-adenosyl-L-methionine-dependent 2'-O-ribose methyltransferase that catalyzes the formation of 2'-O-methyluridine at position 1579 (Um1579) in the mitochondrial large subunit ribosomal RNA (mtLSU rRNA), a universally conserved modification in the peptidyl transferase domain of the mtLSU rRNA. This activity may require prior 2'-O-methylguanosine modification at position 1580 (Gm1580) by MRM3. Essential for late-stage assembly of mtLSU required for efficient translation of mitochondrial DNA encoded proteins; methyltransferase activity is not required for this function. Essential for mitochondrial respiratory function. The protein is rRNA methyltransferase 2, mitochondrial of Drosophila melanogaster (Fruit fly).